A 620-amino-acid polypeptide reads, in one-letter code: LysM domain receptor-like kinase 3 (620 aa).

An N-terminal signal peptide occupies residues 1–23 (MNLKNGLLLFILFLDCVFFKVES). Topologically, residues 24-231 (KCVKGCDVAL…YSRTGIAKGS (208 aa)) are extracellular. 3 disulfides stabilise this stretch: C25–C92, C29–C154, and C90–C152. A glycan (N-linked (GlcNAc...) asparagine) is linked at N46. Positions 46 to 72 (NISNFMQSKIVLTNSFDVIMSYNRDVV) constitute a LysM 1; degenerate domain. LysM domains lie at 102-148 (FEYT…KINV) and 167-210 (VTYP…VFIP). Chitin contacts are provided by residues 108–114 (EGDDYDL) and 136–142 (DPNHIPV). N-linked (GlcNAc...) asparagine glycans are attached at residues N147 and N199. The chain crosses the membrane as a helical span at residues 232–252 (AVGIAMAGIFGLLLFVIYIYA). Over 253–620 (KYFQKKEEEK…QSLINLLSTR (368 aa)) the chain is Cytoplasmic. The segment covering 265–278 (LPQTSRAFSTQDAS) has biased composition (polar residues). The tract at residues 265-292 (LPQTSRAFSTQDASGSAEYETSGSSGHA) is disordered. A phosphoserine mark is found at S269 and S273. Positions 322–595 (FSLDNKIGQG…RSIVVALMTL (274 aa)) constitute a Protein kinase domain. ATP contacts are provided by residues 328–336 (IGQGGFGAV) and K349. D441 (proton acceptor) is an active-site residue.

This sequence belongs to the protein kinase superfamily. Ser/Thr protein kinase family. Forms homodimers and homooligomers. Forms heteromeric complexes with NFP at the cell periphery in nodules. Interacts with PUB1. In terms of processing, autophosphorylated. As to expression, expressed in the epidermal and root hair cells of the developing root hair zone during nonsymbiotic growth. Accumulates in roots and nodules during symbiotic growth with rhizobia. Localized at the cell periphery in a narrow zone of about two cell layers (e.g. L1/L2 zone) at the nodule apex upon infection by rhizobia, from the meristem to the infection zone (at protein level).

It localises to the cell membrane. It is found in the vacuole lumen. The enzyme catalyses L-seryl-[protein] + ATP = O-phospho-L-seryl-[protein] + ADP + H(+). The catalysed reaction is L-threonyl-[protein] + ATP = O-phospho-L-threonyl-[protein] + ADP + H(+). Putative receptor for S.meliloti Nod factor signals essential for the establishment of the nitrogen-fixing, root nodule symbiosis with S.meliloti. Involved in the control of root hair curling after S.meliloti infection, probably by modulating the reorganization of the microtubular cytoskeleton in epidermal and cortical cells. Regulates a subset of Nod factor-induced genes. The protein is LysM domain receptor-like kinase 3 of Medicago truncatula (Barrel medic).